We begin with the raw amino-acid sequence, 1464 residues long: Bridge-like lipid transfer protein family member 3B (1464 aa).

The Chorein N-terminal domain occupies 3–94; the sequence is GIIKKQILKH…DKVIMEMSTC (92 aa). Disordered regions lie at residues 267–297 and 409–436; these read STEQRKSMAPEPTQSSTVVASAQQVKTTQTS and DHNVGSPPKSPTHASPQHTQTEKDYPLK. Over residues 278-297 the composition is skewed to polar residues; it reads PTQSSTVVASAQQVKTTQTS. A phosphoserine mark is found at S414, S418, S774, S935, and S1009. 3 disordered regions span residues 1066–1089, 1164–1183, and 1392–1413; these read SKEETPPVRTLKSQSSLSGKPKER, LQNYGETSPDAISTNSEGAQ, and QRSVTQATQTSPGVPWPSQSAN. Polar residues-rich tracts occupy residues 1164–1182 and 1394–1413; these read LQNYGETSPDAISTNSEGA and SVTQATQTSPGVPWPSQSAN. Residues 1418-1456 are a coiled coil; the sequence is SFDFTREQLMEENESLKQELAKAKMALAEAHLEKDALLH.

Monomer. Homodimer (via N-terminus). Associates with the Golgi-associated retrograde protein (GARP) complex. Interacts with GARP complex component VPS52. Interacts (via C-terminal coiled-coil domain) with STX6.

Its subcellular location is the cytoplasm. It localises to the cytosol. The protein localises to the early endosome. Functionally, tube-forming lipid transport protein which mediates the transfer of lipids between membranes at organelle contact sites. Required for retrograde traffic of vesicle clusters in the early endocytic pathway to the Golgi complex. In Homo sapiens (Human), this protein is Bridge-like lipid transfer protein family member 3B.